The sequence spans 422 residues: Histidine--tRNA ligase (422 aa).

It belongs to the class-II aminoacyl-tRNA synthetase family. As to quaternary structure, homodimer.

Its subcellular location is the cytoplasm. The catalysed reaction is tRNA(His) + L-histidine + ATP = L-histidyl-tRNA(His) + AMP + diphosphate + H(+). The chain is Histidine--tRNA ligase from Nocardia farcinica (strain IFM 10152).